Reading from the N-terminus, the 84-residue chain is RNA-binding protein Hfq (84 aa).

The Sm domain occupies 10-69; it reads DPFLNILRKERIPVSIYLVNGIKLQGQIDSFDQYVVLLKNSVTQMVYKHAISTIVPAKAI.

Belongs to the Hfq family. In terms of assembly, homohexamer.

In terms of biological role, RNA chaperone that binds small regulatory RNA (sRNAs) and mRNAs to facilitate mRNA translational regulation in response to envelope stress, environmental stress and changes in metabolite concentrations. Also binds with high specificity to tRNAs. The protein is RNA-binding protein Hfq of Nitrosomonas europaea (strain ATCC 19718 / CIP 103999 / KCTC 2705 / NBRC 14298).